The following is a 299-amino-acid chain: Fluorinase (299 aa).

S-adenosyl-L-methionine-binding positions include aspartate 16, 21-23, tyrosine 77, serine 158, aspartate 210, asparagine 215, 269-270, and 277-279; these read DDS, SR, and RNA.

Homohexamer; dimers of trimer.

The enzyme catalyses fluoride + S-adenosyl-L-methionine = 5'-deoxy-5'-fluoroadenosine + L-methionine. Its activity is regulated as follows. Competitively inhibited by S-adenosyl-L-homocysteine (AdoHcy) and S-adenosyl-L-homocysteine (SAH). Sinefungin is only weakly inhibitory. Functionally, involved in the biosynthesis of fluorometabolites. Catalyzes the formation of a C-F bond by combining S-adenosyl-L-methionine (SAM) and fluoride to generate 5'-fluoro-5'-deoxyadenosine (5'-FDA) and L-methionine. It can also use 2'-deoxyadenosine in place of adenosine as substrate. The chain is Fluorinase from Streptantibioticus cattleyicolor (Streptomyces cattleya).